A 216-amino-acid polypeptide reads, in one-letter code: Refilin-B (216 aa).

Positions 1–52 (MVGRLSLQDVPELVDTKKKGDGVLDSPDSGLPPSPSPSHWGLAAATGGGGER) are disordered. Phosphoserine is present on residues Ser-6 and Ser-26.

Belongs to the Refilin family. In terms of assembly, interacts with FLNA and FLNB.

The protein resides in the cytoplasm. Its subcellular location is the cytoskeleton. Involved in the regulation of the perinuclear actin network and nuclear shape through interaction with filamins. Plays an essential role in the formation of cartilaginous skeletal elements. This chain is Refilin-B, found in Rattus norvegicus (Rat).